The sequence spans 469 residues: Interstitial collagenase (469 aa).

Residues Met1–Ser19 form the signal peptide. Residues Phe20–Gln99 constitute a propeptide, activation peptide. Ser57 bears the Phosphoserine mark. Positions Pro90–Val97 match the Cysteine switch motif. A Zn(2+)-binding site is contributed by Cys92. The metalloprotease stretch occupies residues Ala98–Lys276. Asn120 carries N-linked (GlcNAc...) asparagine glycosylation. Asp124 and Asp158 together coordinate Ca(2+). 2 residues coordinate Zn(2+): His168 and Asp170. Ca(2+) contacts are provided by Asp175, Gly176, Gly178, and Asn180. His183 contacts Zn(2+). Residues Gly190, Gly192, and Asp194 each coordinate Ca(2+). His196 is a Zn(2+) binding site. Residues Asp198, Glu199, and Glu201 each coordinate Ca(2+). His218 provides a ligand contact to Zn(2+). Glu219 is an active-site residue. Zn(2+) contacts are provided by His222 and His228. Thr274 carries the post-translational modification Phosphothreonine. 4 Hemopexin repeats span residues Pro275 to Leu324, Pro325 to Pro371, Val374 to Ile422, and Gly423 to Cys466. Cys278 and Cys466 are disulfide-bonded. Ca(2+)-binding residues include Asp285 and Glu329. A Phosphotyrosine; by PKDCC modification is found at Tyr360. Ca(2+)-binding residues include Asp378 and Asp427.

This sequence belongs to the peptidase M10A family. As to quaternary structure, (Microbial infection) Interacts with HIV-1 Tat. It depends on Ca(2+) as a cofactor. Zn(2+) serves as cofactor. In terms of processing, undergoes autolytic cleavage to two major forms (22 kDa and 27 kDa). A minor form (25 kDa) is the glycosylated form of the 22 kDa form. The 27 kDa form has no activity while the 22/25 kDa form can act as activator for collagenase. Tyrosine phosphorylated in platelets by PKDCC/VLK.

The protein resides in the secreted. The protein localises to the extracellular space. Its subcellular location is the extracellular matrix. It carries out the reaction Cleavage of the triple helix of collagen at about three-quarters of the length of the molecule from the N-terminus, at 775-Gly-|-Ile-776 in the alpha1(I) chain. Cleaves synthetic substrates and alpha-macroglobulins at bonds where P1' is a hydrophobic residue.. With respect to regulation, can be activated without removal of the activation peptide. In terms of biological role, cleaves collagens of types I, II, and III at one site in the helical domain. Also cleaves collagens of types VII and X. In case of HIV infection, interacts and cleaves the secreted viral Tat protein, leading to a decrease in neuronal Tat's mediated neurotoxicity. This chain is Interstitial collagenase (MMP1), found in Homo sapiens (Human).